The sequence spans 269 residues: Shikimate dehydrogenase (NADP(+)) (269 aa).

Residues 17-19 (SKS) and threonine 64 each bind shikimate. Residue lysine 68 is the Proton acceptor of the active site. Glutamate 80 is a binding site for NADP(+). Asparagine 89 and aspartate 105 together coordinate shikimate. Residues 130–134 (GAGGA), 154–159 (NRTHAK), and methionine 213 each bind NADP(+). Tyrosine 215 contributes to the shikimate binding site. Glycine 237 is a binding site for NADP(+).

This sequence belongs to the shikimate dehydrogenase family. In terms of assembly, homodimer.

The catalysed reaction is shikimate + NADP(+) = 3-dehydroshikimate + NADPH + H(+). It participates in metabolic intermediate biosynthesis; chorismate biosynthesis; chorismate from D-erythrose 4-phosphate and phosphoenolpyruvate: step 4/7. Involved in the biosynthesis of the chorismate, which leads to the biosynthesis of aromatic amino acids. Catalyzes the reversible NADPH linked reduction of 3-dehydroshikimate (DHSA) to yield shikimate (SA). The sequence is that of Shikimate dehydrogenase (NADP(+)) from Neisseria pharyngis.